We begin with the raw amino-acid sequence, 513 residues long: V-type proton ATPase subunit B (513 aa).

Arg375 contributes to the ATP binding site. Over residues Ala484 to Ala503 the composition is skewed to basic and acidic residues. The interval Ala484 to Ala513 is disordered. The span at Ala504–Ala513 shows a compositional bias: acidic residues.

Belongs to the ATPase alpha/beta chains family. V-ATPase is a heteromultimeric enzyme composed of a peripheral catalytic V1 complex (components A to H) attached to an integral membrane V0 proton pore complex (components: a, c, c', c'', d, e, f and VOA1).

The protein resides in the vacuole membrane. In terms of biological role, non-catalytic subunit of the V1 complex of vacuolar(H+)-ATPase (V-ATPase), a multisubunit enzyme composed of a peripheral complex (V1) that hydrolyzes ATP and a membrane integral complex (V0) that translocates protons. V-ATPase is responsible for acidifying and maintaining the pH of intracellular compartments. This Neurospora crassa (strain ATCC 24698 / 74-OR23-1A / CBS 708.71 / DSM 1257 / FGSC 987) protein is V-type proton ATPase subunit B.